The sequence spans 1342 residues: Restriction of telomere capping protein 1 (1342 aa).

Positions 1-39 are disordered; it reads MSLSPHVENASIPKGSTPIPKNRNVSSIGKGEFLGSSSS. WD repeat units lie at residues 207–248, 256–296, 305–342, 367–406, 439–486, and 489–527; these read NKFS…SIDN, EHTR…SKSS, TASDSIRDVKWMPGYNFASKNDQGSSTYGNLKSGYKFA, AHTGPGLCLNWHPNQEYIATGGRDGKCCLWFVGDNANAAE, NTGY…IPKH, and LSETPSLGLVWWDENLIFNIDKGTRINGWDINKEPTVLE. 5 disordered regions span residues 559-593, 600-619, 630-651, 736-766, and 788-831; these read PELQPTSSTTCKKHPGTIKNPKNGNPENQGIIGGI, TGLTSFTPERPPTLKAGPTF, ASSFNSSSASLTSLTPQTENRE, KNATETHGDNTTTTNNNDDGDDDDDDDDDDD, and LMNE…DRSR. Low complexity predominate over residues 630–644; the sequence is ASSFNSSSASLTSLT. The span at 753–766 shows a compositional bias: acidic residues; sequence DDGDDDDDDDDDDD. Over residues 815-824 the composition is skewed to low complexity; sequence SSISSISASR. Residues 844–884 form a WD 7 repeat; sequence KIQTLVDLISIATHNASVYLSIDDLTNFKIWILIRDSLLWD. Disordered regions lie at residues 942–963 and 1014–1047; these read AFRANSDEPSDAEKKPVSKLKE and DEHEHQEEEQPHDSPTKSAQFHASPIAKSIPILQ. 2 stretches are compositionally biased toward basic and acidic residues: residues 952-963 and 1016-1028; these read DAEKKPVSKLKE and HEHQEEEQPHDSP. A phosphoserine mark is found at Ser-1037, Ser-1081, Ser-1088, Ser-1090, Ser-1124, and Ser-1134. WD repeat units follow at residues 1130–1170 and 1217–1256; these read SRPD…KQLY and LFGIAADVLKYCPFEDIMGSEGDQSSIRLFCERCGELITN. The segment at 1294–1336 adopts an RING-type; degenerate zinc-finger fold; that stretch reads CVLCERPLKKLTMVILPCGHEGHFQCIQEWFLDENEQECPGGC.

It belongs to the WD repeat RTC1 family.

It is found in the vacuole. Functionally, may be involved in a process influencing telomere capping. This Saccharomyces cerevisiae (strain JAY291) (Baker's yeast) protein is Restriction of telomere capping protein 1 (RTC1).